A 99-amino-acid chain; its full sequence is Integration host factor subunit beta (99 aa).

It belongs to the bacterial histone-like protein family. In terms of assembly, heterodimer of an alpha and a beta chain.

This protein is one of the two subunits of integration host factor, a specific DNA-binding protein that functions in genetic recombination as well as in transcriptional and translational control. The chain is Integration host factor subunit beta from Laribacter hongkongensis (strain HLHK9).